A 918-amino-acid chain; its full sequence is Whirlin (918 aa).

In terms of domain architecture, PDZ 1 spans 141-224 (LVSLRRAKAH…LVLSVYSAGR (84 aa)). A disordered region spans residues 240-266 (PQGRSTSPPSSLPQPHGSTLRQREDDR). The region spanning 280–362 (KVNLVLGDGR…LILTVKDVGR (83 aa)) is the PDZ 2 domain. 3 disordered regions span residues 387-407 (NSAG…GFYK), 503-538 (SMKA…TSTT), and 560-824 (EGTG…LEPT). The segment covering 522-538 (SYSDTGSSTGSHGTSTT) has biased composition (low complexity). Polar residues predominate over residues 563-572 (GETTQGSTNA). Composition is skewed to pro residues over residues 591–600 (IKPPPPPPPL) and 638–649 (RSPPPGTAPTPG). Positions 654 to 672 (QDSPSSPIYASISHANPSS) are enriched in polar residues. Position 696 is a phosphoserine (serine 696). 2 stretches are compositionally biased toward polar residues: residues 754-773 (QTRT…TLSE) and 783-798 (EAST…SAKN). Residues 800–811 (NGKEQPRTERTA) are compositionally biased toward basic and acidic residues. The PDZ 3 domain occupies 827 to 910 (LVRVRKSAAT…TKERDYIDFL (84 aa)).

Forms homooligomers. Interacts (via C-terminal PDZ domain) with MYO15A; this interaction is necessary for localization of WHRN to stereocilia tips. Interacts (via C-terminal PDZ domain) with MPP1/p55. Interacts with LRRC4C/NGL1. Interacts with MYO7A. Interacts with RPGR. Interacts with EPS8. Interacts with CASK. Interacts with CIB2. Component of USH2 complex, composed of ADGRV1, PDZD7, USH2A and WHRN. Interacts (via PDZ domains) with PDZD7; the interaction is direct. Interacts (via N-terminal PDZ domain) with USH2A (via cytoplasmic region). Interacts with ADGRV1/MASS1 (via cytoplasmic region). As to expression, expressed in the retina. Colocalizes with RPGR in the photoreceptor connecting cilium, a thin bridge linking the cell body and the light-sensing outer segment (at protein level). Detected in the inner ear throughout development from embryonic day 12 to 20 days after birth. Displays a dynamic pattern of expression after birth, demonstrating an ordered appearance and fade-out across stereocilia rows. Isoforms 5, 6, 7 and 8 are not detected in the retina.

The protein resides in the cytoplasm. The protein localises to the cell projection. It localises to the stereocilium. It is found in the growth cone. Its subcellular location is the photoreceptor inner segment. The protein resides in the synapse. Involved in hearing and vision as member of the USH2 complex. Necessary for elongation and maintenance of inner and outer hair cell stereocilia in the organ of Corti in the inner ear. Involved in the maintenance of the hair bundle ankle region, which connects stereocilia in cochlear hair cells of the inner ear. In retina photoreceptors, required for the maintenance of periciliary membrane complex that seems to play a role in regulating intracellular protein transport. This is Whirlin from Mus musculus (Mouse).